We begin with the raw amino-acid sequence, 325 residues long: Pyruvate dehydrogenase E1 component subunit beta (325 aa).

Position 60 (E60) interacts with thiamine diphosphate.

As to quaternary structure, heterodimer of an alpha and a beta chain. It depends on thiamine diphosphate as a cofactor.

It carries out the reaction N(6)-[(R)-lipoyl]-L-lysyl-[protein] + pyruvate + H(+) = N(6)-[(R)-S(8)-acetyldihydrolipoyl]-L-lysyl-[protein] + CO2. Functionally, the pyruvate dehydrogenase complex catalyzes the overall conversion of pyruvate to acetyl-CoA and CO(2). It contains multiple copies of three enzymatic components: pyruvate dehydrogenase (E1), dihydrolipoamide acetyltransferase (E2) and lipoamide dehydrogenase (E3). The chain is Pyruvate dehydrogenase E1 component subunit beta (pdhB) from Staphylococcus aureus (strain Mu50 / ATCC 700699).